A 141-amino-acid chain; its full sequence is Hemoglobin subunit alpha-D (141 aa).

The region spanning 1 to 141 is the Globin domain; sequence MLTADDKKLI…VAAVLAEKYR (141 aa). Heme b is bound by residues histidine 58 and histidine 87.

Belongs to the globin family. As to quaternary structure, heterotetramer of two alpha-D chains and two beta chains. As to expression, red blood cells.

Involved in oxygen transport from the lung to the various peripheral tissues. The polypeptide is Hemoglobin subunit alpha-D (HBAD) (Struthio camelus (Common ostrich)).